We begin with the raw amino-acid sequence, 333 residues long: Cytochrome f (333 aa).

The N-terminal stretch at 1-16 is a signal peptide; it reads MRNVFRTARLTRSARA. A helical transmembrane segment spans residues 17 to 36; that stretch reads IVKTLLIAIATVTFYFTSDL. Residues Tyr-45, Cys-66, Cys-69, and His-70 each contribute to the heme site. The helical transmembrane segment at 299 to 319 threads the bilayer; the sequence is VKWMIAFVALVMLAQVMLVLK.

Belongs to the cytochrome f family. As to quaternary structure, the 4 large subunits of the cytochrome b6-f complex are cytochrome b6, subunit IV (17 kDa polypeptide, PetD), cytochrome f and the Rieske protein, while the 4 small subunits are PetG, PetL, PetM and PetN. The complex functions as a dimer. Requires heme as cofactor.

The protein resides in the cellular thylakoid membrane. In terms of biological role, component of the cytochrome b6-f complex, which mediates electron transfer between photosystem II (PSII) and photosystem I (PSI), cyclic electron flow around PSI, and state transitions. This chain is Cytochrome f, found in Nostoc punctiforme (strain ATCC 29133 / PCC 73102).